Reading from the N-terminus, the 311-residue chain is Aspartate carbamoyltransferase catalytic subunit (311 aa).

Carbamoyl phosphate is bound by residues arginine 59 and threonine 60. Lysine 87 is a binding site for L-aspartate. Carbamoyl phosphate contacts are provided by arginine 109, histidine 139, and glutamine 142. L-aspartate is bound by residues arginine 172 and arginine 224. Residues alanine 265 and proline 266 each contribute to the carbamoyl phosphate site.

This sequence belongs to the aspartate/ornithine carbamoyltransferase superfamily. ATCase family. As to quaternary structure, heterododecamer (2C3:3R2) of six catalytic PyrB chains organized as two trimers (C3), and six regulatory PyrI chains organized as three dimers (R2).

The catalysed reaction is carbamoyl phosphate + L-aspartate = N-carbamoyl-L-aspartate + phosphate + H(+). The protein operates within pyrimidine metabolism; UMP biosynthesis via de novo pathway; (S)-dihydroorotate from bicarbonate: step 2/3. In terms of biological role, catalyzes the condensation of carbamoyl phosphate and aspartate to form carbamoyl aspartate and inorganic phosphate, the committed step in the de novo pyrimidine nucleotide biosynthesis pathway. This is Aspartate carbamoyltransferase catalytic subunit from Streptococcus pyogenes serotype M12 (strain MGAS2096).